Here is a 967-residue protein sequence, read N- to C-terminus: RNA polymerase-associated protein RapA (967 aa).

Residues 163–333 enclose the Helicase ATP-binding domain; the sequence is EVGQRHAPRV…FARLRLLDPN (171 aa). Residue 176-183 coordinates ATP; that stretch reads DEVGLGKT. The DEAH box signature appears at 279–282; sequence DEAH. The Helicase C-terminal domain occupies 489–677; it reads RVEWLLNYLT…TCRQQHDSLK (189 aa).

This sequence belongs to the SNF2/RAD54 helicase family. RapA subfamily. In terms of assembly, interacts with the RNAP. Has a higher affinity for the core RNAP than for the holoenzyme. Its ATPase activity is stimulated by binding to RNAP.

Its function is as follows. Transcription regulator that activates transcription by stimulating RNA polymerase (RNAP) recycling in case of stress conditions such as supercoiled DNA or high salt concentrations. Probably acts by releasing the RNAP, when it is trapped or immobilized on tightly supercoiled DNA. Does not activate transcription on linear DNA. Probably not involved in DNA repair. The chain is RNA polymerase-associated protein RapA from Pectobacterium atrosepticum (strain SCRI 1043 / ATCC BAA-672) (Erwinia carotovora subsp. atroseptica).